The primary structure comprises 729 residues: Fatty acid oxidation complex subunit alpha (729 aa).

The segment at 1 to 189 is enoyl-CoA hydratase/isomerase; sequence MLYKGDTLYL…KIGLVDGVVK (189 aa). A substrate-binding site is contributed by Asp296. A 3-hydroxyacyl-CoA dehydrogenase region spans residues 311 to 729; that stretch reads ETPKQAAVLG…ARPVGDLKTA (419 aa). Residues Met324, Asp343, 400–402, Lys407, and Ser429 each bind NAD(+); that span reads VVE. The active-site For 3-hydroxyacyl-CoA dehydrogenase activity is His450. Asn453 is a binding site for NAD(+). Substrate contacts are provided by Asn500 and Tyr660. The disordered stretch occupies residues 708–729; sequence RHNEPYYPPVEPARPVGDLKTA.

It in the N-terminal section; belongs to the enoyl-CoA hydratase/isomerase family. This sequence in the C-terminal section; belongs to the 3-hydroxyacyl-CoA dehydrogenase family. As to quaternary structure, heterotetramer of two alpha chains (FadB) and two beta chains (FadA).

The catalysed reaction is a (3S)-3-hydroxyacyl-CoA + NAD(+) = a 3-oxoacyl-CoA + NADH + H(+). It carries out the reaction a (3S)-3-hydroxyacyl-CoA = a (2E)-enoyl-CoA + H2O. The enzyme catalyses a 4-saturated-(3S)-3-hydroxyacyl-CoA = a (3E)-enoyl-CoA + H2O. It catalyses the reaction (3S)-3-hydroxybutanoyl-CoA = (3R)-3-hydroxybutanoyl-CoA. The catalysed reaction is a (3Z)-enoyl-CoA = a 4-saturated (2E)-enoyl-CoA. It carries out the reaction a (3E)-enoyl-CoA = a 4-saturated (2E)-enoyl-CoA. It functions in the pathway lipid metabolism; fatty acid beta-oxidation. Involved in the aerobic and anaerobic degradation of long-chain fatty acids via beta-oxidation cycle. Catalyzes the formation of 3-oxoacyl-CoA from enoyl-CoA via L-3-hydroxyacyl-CoA. It can also use D-3-hydroxyacyl-CoA and cis-3-enoyl-CoA as substrate. This Escherichia coli O81 (strain ED1a) protein is Fatty acid oxidation complex subunit alpha.